A 671-amino-acid polypeptide reads, in one-letter code: DNA ligase (671 aa).

NAD(+) is bound by residues Asp-32–Asp-36, Ser-81–Leu-82, and Glu-113. Lys-115 (N6-AMP-lysine intermediate) is an active-site residue. NAD(+) is bound by residues Arg-136, Glu-173, Lys-290, and Lys-314. Positions 408, 411, 426, and 432 each coordinate Zn(2+). The BRCT domain maps to Glu-593–Val-671.

This sequence belongs to the NAD-dependent DNA ligase family. LigA subfamily. Mg(2+) serves as cofactor. The cofactor is Mn(2+).

The enzyme catalyses NAD(+) + (deoxyribonucleotide)n-3'-hydroxyl + 5'-phospho-(deoxyribonucleotide)m = (deoxyribonucleotide)n+m + AMP + beta-nicotinamide D-nucleotide.. DNA ligase that catalyzes the formation of phosphodiester linkages between 5'-phosphoryl and 3'-hydroxyl groups in double-stranded DNA using NAD as a coenzyme and as the energy source for the reaction. It is essential for DNA replication and repair of damaged DNA. The protein is DNA ligase of Salmonella arizonae (strain ATCC BAA-731 / CDC346-86 / RSK2980).